The chain runs to 185 residues: Ribosome-recycling factor (185 aa).

Belongs to the RRF family.

It is found in the cytoplasm. Functionally, responsible for the release of ribosomes from messenger RNA at the termination of protein biosynthesis. May increase the efficiency of translation by recycling ribosomes from one round of translation to another. The chain is Ribosome-recycling factor from Clavibacter sepedonicus (Clavibacter michiganensis subsp. sepedonicus).